A 205-amino-acid polypeptide reads, in one-letter code: Riboflavin kinase (205 aa).

A disordered region spans residues 1 to 24; the sequence is MRPDTSRDPVAGPDSGPEPPFPIR. The Mg(2+) site is built by T44 and N46. Catalysis depends on E104, which acts as the Nucleophile.

It belongs to the flavokinase family. The cofactor is Zn(2+). Mg(2+) is required as a cofactor.

It catalyses the reaction riboflavin + ATP = FMN + ADP + H(+). It functions in the pathway cofactor biosynthesis; FMN biosynthesis; FMN from riboflavin (ATP route): step 1/1. In terms of biological role, catalyzes the phosphorylation of riboflavin (vitamin B2) to form flavin mononucleotide (FMN) coenzyme. The chain is Riboflavin kinase (fmn1) from Aspergillus terreus (strain NIH 2624 / FGSC A1156).